We begin with the raw amino-acid sequence, 124 residues long: Ragulator complex protein LAMTOR3 (124 aa).

Residues 57–70 (TDQGSKLGLSKNKS) form a required for interaction with LAMTOR2 region.

This sequence belongs to the LAMTOR3 family. As to quaternary structure, part of the Ragulator complex composed of LAMTOR1, LAMTOR2, LAMTOR3, LAMTOR4 and LAMTOR5. LAMTOR4 and LAMTOR5 form a heterodimer that interacts, through LAMTOR1, with a LAMTOR2, LAMTOR3 heterodimer. Interacts with LAMTOR1 and LAMTOR2; the interaction is direct. The Ragulator complex interacts with both the mTORC1 complex and heterodimers constituted of the Rag GTPases RagA/RRAGA, RagB/RRAGB, RagC/RRAGC and RagD/RRAGD; regulated by amino acid availability. The Ragulator complex interacts with SLC38A9; the probable amino acid sensor. Component of the lysosomal folliculin complex (LFC), composed of FLCN, FNIP1 (or FNIP2), RagA/RRAGA or RagB/RRAGB GDP-bound, RagC/RRAGC or RagD/RRAGD GTP-bound, and Ragulator. Interacts with MAP2K1/MEK1 and MAPK2. Interacts with MORG1.

The protein localises to the late endosome membrane. In terms of biological role, as part of the Ragulator complex it is involved in amino acid sensing and activation of mTORC1, a signaling complex promoting cell growth in response to growth factors, energy levels, and amino acids. Activated by amino acids through a mechanism involving the lysosomal V-ATPase, the Ragulator plays a dual role for the small GTPases Rag (RagA/RRAGA, RagB/RRAGB, RagC/RRAGC and/or RagD/RRAGD): it (1) acts as a guanine nucleotide exchange factor (GEF), activating the small GTPases Rag and (2) mediates recruitment of Rag GTPases to the lysosome membrane. Activated Ragulator and Rag GTPases function as a scaffold recruiting mTORC1 to lysosomes where it is in turn activated. Adapter protein that enhances the efficiency of the MAP kinase cascade facilitating the activation of MAPK2. The chain is Ragulator complex protein LAMTOR3 from Homo sapiens (Human).